Here is an 890-residue protein sequence, read N- to C-terminus: Receptor like protein 23 (890 aa).

The first 22 residues, 1–22, serve as a signal peptide directing secretion; the sequence is MSKALLHLHFLSLFLLCCVCHS. The Extracellular segment spans residues 23–850; that stretch reads SIFTLNFHFT…EEEEEVLNGR (828 aa). 5 N-linked (GlcNAc...) asparagine glycosylation sites follow: N58, N70, N91, N109, and N145. LRR repeat units follow at residues 97–121, 123–145, 146–171, 173–195, 196–218, 220–243, 244–268, 270–290, 291–316, 318–339, 340–363, 364–389, 391–411, 412–436, 438–461, 462–485, 487–506, 507–527, 528–551, 553–575, 577–598, 599–623, 626–650, 699–724, 726–747, 748–771, and 773–796; these read FHQL…GFGN, KRLE…SFSN, LTML…GLRK, IVLD…LFEL, HQLR…KFGN, HRLE…ISNL, TRLT…NLTN, YELD…LLTL, PFLA…STSS, LEIM…ISKL, INLK…LFSS, LKSL…SYIP, TLEM…ILKT, LKEL…LWSL, LLQS…ILVN, SSVL…PLSI, GFGV…ICNR, SSLA…PPCL, RNLE…LCDG, SLRT…FVNC, SLKF…WLKA, LPNL…HQGP, FPEL…YFVN, LTSY…GLLK, LIAV…MANL, ENLE…LGSI, and FLAY…QITG. N-linked (GlcNAc...) asparagine glycans are attached at residues N189, N207, N242, and N265. N-linked (GlcNAc...) asparagine glycosylation occurs at N311. N351 carries an N-linked (GlcNAc...) asparagine glycan. A glycan (N-linked (GlcNAc...) asparagine) is linked at N461. 2 N-linked (GlcNAc...) asparagine glycosylation sites follow: N505 and N518. N574 carries an N-linked (GlcNAc...) asparagine glycan. An N-linked (GlcNAc...) asparagine glycan is attached at N730. An N-linked (GlcNAc...) asparagine glycan is attached at N778. The chain crosses the membrane as a helical span at residues 851 to 871; that stretch reads AVAIGYGSGLLLGLAIAQVIA. Residues 872–890 are Cytoplasmic-facing; that stretch reads SYKPEWLVKIIGLNKRRKR.

Belongs to the RLP family. Directly interacts with a 20-mer fragment (nlp20) from NLPs through its extracellular LRR domain. Component of a trimeric complex composed of RLP23, SOBIR1 and BAK1. BAK1 is recruited into a pre-formed RLP23-SOBIR1 complex in a ligand-dependent manner. Interacts with SOBIR1.

It is found in the cell membrane. In terms of biological role, involved in the perception of necrosis and ethylene-inducing peptide 1-like proteins (NLPs), that act as extracellular signals mediating immune activation. Component of the RLP23-SOBIR1-BAK1 complex that mediates NLP-triggered immunity. This chain is Receptor like protein 23, found in Arabidopsis thaliana (Mouse-ear cress).